The sequence spans 78 residues: MGGYVNIKTFTHPAGEGKEVKGMEVSVPFEIYSNEHRIADAHYQTFPSEKAAYTTVVTDAADWRTKNAAMFTPTPVSG.

It belongs to the Tevenvirinae Soc family. As to quaternary structure, homotrimer. Interacts with the major capsid protein; three soc molecules associate with each interface between the major capsid protein facets.

The protein localises to the virion. Functionally, capsid decoration protein which helps to stabilize the capsid against extremes of pH and temperature. Once maturation and expansion of the capsid has occured, trimers of soc attach the interfaces between the hexamer of the major capsid protein. Acts as a 'glue' between neighboring hexameric capsomers. Dispensable for the head morphogenesis and phage infection. The chain is Small outer capsid protein from Escherichia phage RB69 (Bacteriophage RB69).